A 237-amino-acid polypeptide reads, in one-letter code: Cell division cycle-associated protein 4 (237 aa).

An SERTA domain is found at 26-73; that stretch reads YSLQRQSLLDMSLVKLQLCHMLVEPNLCRSVLIANTVRQIQEEMSQDG.

Expressed preferentially in hematopoietic progenitors and mature blood cells. Expressed at low levels in the heart, lung, spleen, and thymus and at a higher level in muscle.

It localises to the nucleus. In terms of biological role, may participate in the regulation of cell proliferation through the E2F/RB pathway. May be involved in molecular regulation of hematopoietic stem cells and progenitor cell lineage commitment and differentiation. This chain is Cell division cycle-associated protein 4 (Cdca4), found in Mus musculus (Mouse).